The sequence spans 247 residues: Membrane-embedded CAAX protease MroQ (247 aa).

Positions 1–17 (MTRLWASLLTVIIYILS) are cleaved as a signal peptide. Transmembrane regions (helical) follow at residues 42–62 (VIYI…LINL), 81–101 (IIPW…VVSI), and 119–139 (LIII…IGPL). E141 is a catalytic residue. A run of 2 helical transmembrane segments spans residues 162-182 (IVAF…AHND) and 183-203 (FKFI…YVWT).

The protein belongs to the peptidase U48 family.

It localises to the membrane. Participates in the regulation of the Agr quorum sensing activity and plays thereby an important role in virulence. Mechanistically, elicits a protease dependent control of Agr activity without playing a role in the processing of the pheromone-precursor AgrD. This Staphylococcus aureus (strain USA300) protein is Membrane-embedded CAAX protease MroQ (mroQ).